Reading from the N-terminus, the 598-residue chain is Aspartate--tRNA(Asp/Asn) ligase (598 aa).

Position 174 (Glu174) interacts with L-aspartate. The tract at residues 198-201 (QQLK) is aspartate. Residue Arg220 participates in L-aspartate binding. ATP contacts are provided by residues 220 to 222 (RDE) and Gln229. His458 is a binding site for L-aspartate. An ATP-binding site is contributed by Glu492. Arg499 lines the L-aspartate pocket. 544–547 (GIDR) provides a ligand contact to ATP.

This sequence belongs to the class-II aminoacyl-tRNA synthetase family. Type 1 subfamily. Homodimer.

The protein resides in the cytoplasm. The enzyme catalyses tRNA(Asx) + L-aspartate + ATP = L-aspartyl-tRNA(Asx) + AMP + diphosphate. Functionally, aspartyl-tRNA synthetase with relaxed tRNA specificity since it is able to aspartylate not only its cognate tRNA(Asp) but also tRNA(Asn). Reaction proceeds in two steps: L-aspartate is first activated by ATP to form Asp-AMP and then transferred to the acceptor end of tRNA(Asp/Asn). This is Aspartate--tRNA(Asp/Asn) ligase from Dehalococcoides mccartyi (strain ATCC BAA-2266 / KCTC 15142 / 195) (Dehalococcoides ethenogenes (strain 195)).